Reading from the N-terminus, the 141-residue chain is Nucleoside diphosphate kinase (141 aa).

ATP contacts are provided by Lys11, Phe59, Arg87, Thr93, Arg104, and Asn114. His117 acts as the Pros-phosphohistidine intermediate in catalysis.

It belongs to the NDK family. As to quaternary structure, homotetramer. Mg(2+) serves as cofactor.

It localises to the cytoplasm. It catalyses the reaction a 2'-deoxyribonucleoside 5'-diphosphate + ATP = a 2'-deoxyribonucleoside 5'-triphosphate + ADP. The catalysed reaction is a ribonucleoside 5'-diphosphate + ATP = a ribonucleoside 5'-triphosphate + ADP. Its function is as follows. Major role in the synthesis of nucleoside triphosphates other than ATP. The ATP gamma phosphate is transferred to the NDP beta phosphate via a ping-pong mechanism, using a phosphorylated active-site intermediate. This is Nucleoside diphosphate kinase from Burkholderia ambifaria (strain MC40-6).